The following is a 957-amino-acid chain: Glycine dehydrogenase (decarboxylating) (957 aa).

The residue at position 708 (K708) is an N6-(pyridoxal phosphate)lysine.

Belongs to the GcvP family. The glycine cleavage system is composed of four proteins: P, T, L and H. Requires pyridoxal 5'-phosphate as cofactor.

It carries out the reaction N(6)-[(R)-lipoyl]-L-lysyl-[glycine-cleavage complex H protein] + glycine + H(+) = N(6)-[(R)-S(8)-aminomethyldihydrolipoyl]-L-lysyl-[glycine-cleavage complex H protein] + CO2. Its function is as follows. The glycine cleavage system catalyzes the degradation of glycine. The P protein binds the alpha-amino group of glycine through its pyridoxal phosphate cofactor; CO(2) is released and the remaining methylamine moiety is then transferred to the lipoamide cofactor of the H protein. The sequence is that of Glycine dehydrogenase (decarboxylating) from Escherichia coli O8 (strain IAI1).